The primary structure comprises 501 residues: Sarpagan bridge enzyme (501 aa).

A helical; Signal-anchor for type II membrane protein transmembrane segment spans residues 3–23 (VMQLSFSYPALFLFVFFLFML). Residue cysteine 441 participates in heme binding.

This sequence belongs to the cytochrome P450 family. The cofactor is heme. In terms of tissue distribution, highly expressed in roots. Expressed at low levels in stems.

Its subcellular location is the endoplasmic reticulum membrane. It carries out the reaction (19E)-geissoschizine + reduced [NADPH--hemoprotein reductase] + O2 = polyneuridine aldehyde + oxidized [NADPH--hemoprotein reductase] + 2 H2O + H(+). The enzyme catalyses tetrahydroalstonine + A + reduced [NADPH--hemoprotein reductase] + O2 = alstonine + AH2 + oxidized [NADPH--hemoprotein reductase] + 2 H2O + H(+). The catalysed reaction is ajmalicine + A + reduced [NADPH--hemoprotein reductase] + O2 = serpentine + AH2 + oxidized [NADPH--hemoprotein reductase] + 2 H2O + H(+). The protein operates within alkaloid biosynthesis; ajmaline biosynthesis. Functionally, monooxygenase involved in the biosynthesis of ajmaline-type monoterpenoid indole alkaloids (MIAs) natural products, important plant-derived pharmaceuticals used in the therapy of heart disorders. Converts by cyclization the strictosidine-derived geissoschizine to the sarpagan alkaloid polyneuridine aldehyde, precursor of vomilenine, an intermediate chemical in the biosynthesis of ajmaline. Converts by aromatization the tetrahydro-beta-carboline alkaloids tetrahydroalstonine and ajmalicine to the corresponding beta-carboline alkaloids alstonine and serpentine, respectively. The polypeptide is Sarpagan bridge enzyme (Gelsemium sempervirens (Carolina jasmine)).